A 123-amino-acid chain; its full sequence is Large ribosomal subunit protein uL29 (123 aa).

Lysine 19 carries the N6-acetyllysine modification. Lysine 25 participates in a covalent cross-link: Glycyl lysine isopeptide (Lys-Gly) (interchain with G-Cter in SUMO2). The residue at position 29 (serine 29) is a Phosphoserine. Lysine 43 is modified (N6-acetyllysine). A disordered region spans residues leucine 95–tyrosine 114.

The protein belongs to the universal ribosomal protein uL29 family. As to quaternary structure, component of the large ribosomal subunit.

The protein localises to the cytoplasm. In terms of biological role, component of the large ribosomal subunit. The ribosome is a large ribonucleoprotein complex responsible for the synthesis of proteins in the cell. In Bos taurus (Bovine), this protein is Large ribosomal subunit protein uL29 (RPL35).